We begin with the raw amino-acid sequence, 1484 residues long: Cystic fibrosis transmembrane conductance regulator (1484 aa).

At 1 to 77 (MQRSPLEKAS…KLINALRRCF (77 aa)) the chain is on the cytoplasmic side. The helical transmembrane segment at 78-98 (FWRFMFYGIILYLGEVTKSVQ) threads the bilayer. Positions 81–365 (FMFYGIILYL…WAVQTWYDSL (285 aa)) constitute an ABC transmembrane type-1 1 domain. Over 99-122 (PLLLGRIIASYDPDNKEERSIAIY) the chain is Extracellular. Residues 123–146 (LGIGLCLLFVMRTLLLHPAIFGLH) traverse the membrane as a helical segment. The Cytoplasmic segment spans residues 147-195 (RIGMQMRIAMFSLIYKKTLKLSSRVLDKISIGQLVSLLSNNLNKFDEGL). The chain crosses the membrane as a helical span at residues 196–216 (ALAHFVWIAPLQVTLLMGLLW). Residues 217-222 (DLLQAS) are Extracellular-facing. The helical transmembrane segment at 223 to 243 (AFCGLAFLIVLALFQAGLGRM) threads the bilayer. The Cytoplasmic portion of the chain corresponds to 244 to 298 (MMKYRDQRAGKINERLVITSEMIENIQSVKAYCWEEAMEKMIESIRQTELKLTRK). Residues 299 to 319 (AAYVRYFNSSAFFFSGFFVVF) traverse the membrane as a helical segment. The Extracellular portion of the chain corresponds to 320-339 (LSVLPYALIKTIVLRKIFTT). The helical transmembrane segment at 340–358 (ISFCIVLRMAVTRQFPWAV) threads the bilayer. Over 359–860 (QTWYDSLGAI…YLRYVTIHKS (502 aa)) the chain is Cytoplasmic. ATP contacts are provided by residues Trp-401, Ser-434, 458-465 (GSTGAGKT), and Gln-493. Positions 423 to 646 (NADNSLFFSN…RPDFSSKLMG (224 aa)) constitute an ABC transporter 1 domain. Cys-524 carries the S-palmitoyl cysteine lipid modification. Ser-549 and Ser-660 each carry phosphoserine. The tract at residues 654–833 (SAERRNSIIT…EEINEEDLKE (180 aa)) is disordered R region. Ser-670 carries the post-translational modification Phosphoserine; by PKA. Ser-686 is subject to Phosphoserine. Lys-688 is covalently cross-linked (Glycyl lysine isopeptide (Lys-Gly) (interchain with G-Cter in ubiquitin)). Ser-700 and Ser-712 each carry phosphoserine. Position 717 is a phosphothreonine (Thr-717). Ser-737, Ser-769, Ser-792, Ser-797, and Ser-815 each carry phosphoserine. Residues 861–881 (LVFVLIWCLVIFLAEVAISLV) traverse the membrane as a helical segment. The 297-residue stretch at 861–1157 (LVFVLIWCLV…AVNSSIDVDS (297 aa)) folds into the ABC transmembrane type-1 2 domain. Topologically, residues 882–920 (VLWLLKKTASQDKGNSTQSINSSYTVIFTSTSTYYVFYI) are extracellular. Asn-896 and Asn-902 each carry an N-linked (GlcNAc...) asparagine glycan. The chain crosses the membrane as a discontinuously helical span at residues 921–941 (YVGVADTLLALGFFRGLPLVH). The Cytoplasmic segment spans residues 942 to 992 (TLITVSKILHHKMLHAVLQAPMSTLNALKAGGILNRFSKDIAILDDLLPLT). The chain crosses the membrane as a helical span at residues 993-1013 (IFDFVQLLLIVIGAVTVVSAL). Residues 1014–1015 (QP) lie on the Extracellular side of the membrane. The helical transmembrane segment at 1016–1036 (YIFLATVPVIAAFIMLRAYFL) threads the bilayer. Residues 1037 to 1097 (HTSQQLKQLE…TANWFLYLST (61 aa)) lie on the Cytoplasmic side of the membrane. A helical transmembrane segment spans residues 1098-1118 (LRWFQMRMEIIFVIFFIAITF). The Extracellular portion of the chain corresponds to 1119–1132 (ISILTTGEGVGAVG). Residues 1133 to 1153 (IILTLAMNIMGTLQWAVNSSI) form a helical membrane-spanning segment. Over 1154–1484 (DVDSLMRSVS…TEEEVQETRL (331 aa)) the chain is Cytoplasmic. The 234-residue stretch at 1214 to 1447 (MTVKDLTAKY…KSLFRQAISP (234 aa)) folds into the ABC transporter 2 domain. ATP-binding positions include Tyr-1223 and 1248 to 1255 (GRTGSGKS). An interaction with GORASP2 region spans residues 1390–1484 (RTLKQAFADC…TEEEVQETRL (95 aa)). Residue Cys-1399 is the site of S-palmitoyl cysteine attachment. Ser-1448 and Ser-1460 each carry phosphoserine. Residues 1456–1465 (HRNSSKHKSR) show a composition bias toward basic residues. Residues 1456 to 1484 (HRNSSKHKSRSQIAALKEETEEEVQETRL) are disordered. Residues 1474–1484 (ETEEEVQETRL) are compositionally biased toward acidic residues. The PDZ-binding signature appears at 1482-1484 (TRL).

The protein belongs to the ABC transporter superfamily. ABCC family. CFTR transporter (TC 3.A.1.202) subfamily. In terms of assembly, monomer; does not require oligomerization for channel activity. May form oligomers in the membrane. Interacts with SLC26A3, SLC26A6 and NHERF1. Interacts with SHANK2. Interacts with MYO6. Interacts (via C-terminus) with GOPC (via PDZ domain); this promotes CFTR internalization and thereby decreases channel activity. Interacts with SLC4A7 through NHERF1. Found in a complex with MYO5B and RAB11A. Interacts with ANO1. Interacts with SLC26A8. Interacts with AHCYL1; the interaction increases CFTR activity. Interacts with CSE1L. The core-glycosylated form interacts with GORASP2 (via PDZ GRASP-type 1 domain) in respone to ER stress. Interacts with MARCHF2; the interaction leads to CFTR ubiqtuitination and degradation. Interacts with ADGRG2. N-glycosylated. Post-translationally, phosphorylated; cAMP treatment promotes phosphorylation and activates the channel. Dephosphorylation decreases the ATPase activity (in vitro). Phosphorylation at PKA sites activates the channel. Phosphorylation at PKC sites enhances the response to phosphorylation by PKA. Phosphorylated by AMPK; this inhibits channel activity. In terms of processing, ubiquitinated, leading to its degradation in the lysosome. Deubiquitination by USP10 in early endosomes enhances its endocytic recycling to the cell membrane. Ubiquitinated by RNF185 during ER stress. Ubiquitinated by MARCHF2.

It localises to the apical cell membrane. The protein resides in the early endosome membrane. The protein localises to the cell membrane. Its subcellular location is the recycling endosome membrane. It is found in the endoplasmic reticulum membrane. It localises to the nucleus. The catalysed reaction is ATP + H2O + closed Cl(-) channel = ADP + phosphate + open Cl(-) channel.. It catalyses the reaction chloride(in) = chloride(out). It carries out the reaction hydrogencarbonate(in) = hydrogencarbonate(out). The enzyme catalyses ATP + H2O = ADP + phosphate + H(+). In terms of biological role, epithelial ion channel that plays an important role in the regulation of epithelial ion and water transport and fluid homeostasis. Mediates the transport of chloride ions across the cell membrane. Possesses an intrinsic ATPase activity and utilizes ATP to gate its channel; the passive flow of anions through the channel is gated by cycles of ATP binding and hydrolysis by the ATP-binding domains. The ion channel is also permeable to HCO(3)(-); selectivity depends on the extracellular chloride concentration. Exerts its function also by modulating the activity of other ion channels and transporters. Contributes to the regulation of the pH and the ion content of the epithelial fluid layer. Modulates the activity of the epithelial sodium channel (ENaC) complex, in part by regulating the cell surface expression of the ENaC complex. May regulate bicarbonate secretion and salvage in epithelial cells by regulating the transporter SLC4A7. Can inhibit the chloride channel activity of ANO1. Plays a role in the chloride and bicarbonate homeostasis during sperm epididymal maturation and capacitation. This Mustela putorius furo (European domestic ferret) protein is Cystic fibrosis transmembrane conductance regulator.